The chain runs to 378 residues: Spermidine/putrescine import ATP-binding protein PotA (378 aa).

Residues 18–248 (VLLSGISKSF…PKNLFVAGFI (231 aa)) form the ABC transporter domain. Residue 50–57 (GPSGCGKT) coordinates ATP.

Belongs to the ABC transporter superfamily. Spermidine/putrescine importer (TC 3.A.1.11.1) family. As to quaternary structure, the complex is composed of two ATP-binding proteins (PotA), two transmembrane proteins (PotB and PotC) and a solute-binding protein (PotD).

Its subcellular location is the cell inner membrane. It carries out the reaction ATP + H2O + polyamine-[polyamine-binding protein]Side 1 = ADP + phosphate + polyamineSide 2 + [polyamine-binding protein]Side 1.. In terms of biological role, part of the ABC transporter complex PotABCD involved in spermidine/putrescine import. Responsible for energy coupling to the transport system. This is Spermidine/putrescine import ATP-binding protein PotA from Salmonella typhi.